The primary structure comprises 372 residues: Alanine dehydrogenase 1 (372 aa).

His94 is an active-site residue. 170–200 (TYVIFGGGVAATNAANVALGLNAKVIIIELN) is an NAD(+) binding site.

The protein belongs to the AlaDH/PNT family.

It carries out the reaction L-alanine + NAD(+) + H2O = pyruvate + NH4(+) + NADH + H(+). Its pathway is amino-acid degradation; L-alanine degradation via dehydrogenase pathway; NH(3) and pyruvate from L-alanine: step 1/1. In terms of biological role, may play a role in cell wall synthesis as L-alanine is an important constituent of the peptidoglycan layer. The sequence is that of Alanine dehydrogenase 1 (ald1) from Staphylococcus aureus (strain MRSA252).